A 1273-amino-acid polypeptide reads, in one-letter code: DNA-directed RNA polymerase subunit beta (1273 aa).

Residues 1252–1273 (ADDQDLVVSSNDEEVSENDERS) form a disordered region.

It belongs to the RNA polymerase beta chain family. As to quaternary structure, the RNAP catalytic core consists of 2 alpha, 1 beta, 1 beta' and 1 omega subunit. When a sigma factor is associated with the core the holoenzyme is formed, which can initiate transcription.

The catalysed reaction is RNA(n) + a ribonucleoside 5'-triphosphate = RNA(n+1) + diphosphate. DNA-dependent RNA polymerase catalyzes the transcription of DNA into RNA using the four ribonucleoside triphosphates as substrates. This Dehalococcoides mccartyi (strain CBDB1) protein is DNA-directed RNA polymerase subunit beta.